Consider the following 484-residue polypeptide: Glutamate--tRNA ligase (484 aa).

Residues P11–N21 carry the 'HIGH' region motif. The short motif at K252–R256 is the 'KMSKS' region element. K255 is an ATP binding site.

Belongs to the class-I aminoacyl-tRNA synthetase family. Glutamate--tRNA ligase type 1 subfamily. As to quaternary structure, monomer.

It localises to the cytoplasm. The enzyme catalyses tRNA(Glu) + L-glutamate + ATP = L-glutamyl-tRNA(Glu) + AMP + diphosphate. Functionally, catalyzes the attachment of glutamate to tRNA(Glu) in a two-step reaction: glutamate is first activated by ATP to form Glu-AMP and then transferred to the acceptor end of tRNA(Glu). The protein is Glutamate--tRNA ligase of Staphylococcus aureus (strain MRSA252).